The primary structure comprises 608 residues: MPSFDSKAFLKSVTHQPGVYRMYNAEADVIYVGKAKDLKKRLSSYFRSNVPSEKTKALVSHIHQVDVTVTHSETEALILEHNYIKQYLPKYNVLLRDDKSYPYIFISQHKHPRISIHRGVKRKKGEYFGPYPDSGAVRESLHLIQKLFPIRQCEDSVYANRHRPCLMHQIGRCLAPCVKGIVSDEEYKEQTDFIRLFLQGKDRQVIQTLVKQMESASQSLNFEKAAIIRDQIQAMRRVQEQQYVSDDSGDDLDVLGFAIENGLACVHLLMIRQGKILGSRSFFPKIPANTDKEEVFLSFLTQYYLNHTQGRTIPNRVVTSFEFNSEDLERALTELSGRKVIFQLNPKGIKGRYLKLADTNALTALTSKSNHKLTMYQRFKQLEEALVLSSIQRMECFDISHTMGEKTVASCVVFNQEGPVKSEYRRYNIAGITGGDDYAAMAQVLERRYSKQLDIDKIPDIIFIDGGKGQLNRAYEVISKHWEDWPKQPLLLGIAKGVTRKHGLETLVKISGEEFSMPSDSPALHLIQHIRDESHNHAIGGHRAQRAKVRKTSTLQNIDGVGPKRRQALLQYLGGLQELKSASVEEIAKVPGISHSLAEKIHDALKHG.

The GIY-YIG domain maps to 15–93 (HQPGVYRMYN…IKQYLPKYNV (79 aa)). Residues 203–238 (RQVIQTLVKQMESASQSLNFEKAAIIRDQIQAMRRV) form the UVR domain.

This sequence belongs to the UvrC family. Interacts with UvrB in an incision complex.

Its subcellular location is the cytoplasm. In terms of biological role, the UvrABC repair system catalyzes the recognition and processing of DNA lesions. UvrC both incises the 5' and 3' sides of the lesion. The N-terminal half is responsible for the 3' incision and the C-terminal half is responsible for the 5' incision. This chain is UvrABC system protein C, found in Aliivibrio fischeri (strain ATCC 700601 / ES114) (Vibrio fischeri).